The chain runs to 148 residues: UPF0178 protein BH16190 (148 aa).

This sequence belongs to the UPF0178 family.

In Bartonella henselae (strain ATCC 49882 / DSM 28221 / CCUG 30454 / Houston 1) (Rochalimaea henselae), this protein is UPF0178 protein BH16190.